The following is a 239-amino-acid chain: dITP/XTP pyrophosphatase (239 aa).

A substrate-binding site is contributed by 7 to 12 (THNEGK). The active-site Proton acceptor is aspartate 74. Residue aspartate 74 participates in Mg(2+) binding. Substrate contacts are provided by residues serine 75, 182–185 (FGYD), lysine 214, and 219–220 (HR).

Belongs to the HAM1 NTPase family. In terms of assembly, homodimer. It depends on Mg(2+) as a cofactor.

It carries out the reaction XTP + H2O = XMP + diphosphate + H(+). It catalyses the reaction dITP + H2O = dIMP + diphosphate + H(+). The enzyme catalyses ITP + H2O = IMP + diphosphate + H(+). Pyrophosphatase that catalyzes the hydrolysis of nucleoside triphosphates to their monophosphate derivatives, with a high preference for the non-canonical purine nucleotides XTP (xanthosine triphosphate), dITP (deoxyinosine triphosphate) and ITP. Seems to function as a house-cleaning enzyme that removes non-canonical purine nucleotides from the nucleotide pool, thus preventing their incorporation into DNA/RNA and avoiding chromosomal lesions. The polypeptide is dITP/XTP pyrophosphatase (Bifidobacterium animalis subsp. lactis (strain AD011)).